Consider the following 138-residue polypeptide: ATP synthase epsilon chain (138 aa).

It belongs to the ATPase epsilon chain family. As to quaternary structure, F-type ATPases have 2 components, CF(1) - the catalytic core - and CF(0) - the membrane proton channel. CF(1) has five subunits: alpha(3), beta(3), gamma(1), delta(1), epsilon(1). CF(0) has three main subunits: a, b and c.

It localises to the cell inner membrane. Its function is as follows. Produces ATP from ADP in the presence of a proton gradient across the membrane. In Geotalea daltonii (strain DSM 22248 / JCM 15807 / FRC-32) (Geobacter daltonii), this protein is ATP synthase epsilon chain.